A 478-amino-acid polypeptide reads, in one-letter code: MTPEDQEETQPLLRPPGGSAPRGRRVFLAAFAAALGPLSFGFALGYSSPAIPSLRRAAPPAPHLDEDAASWFGAIVTLGAAAGGVLGGWLLDRAGRKLSLVLCALPFVAGFAVITAAQNLWMLLGGRLLTGLACGIASLVAPVYISEIAYPEVRGLLGSCVQLMVVTGILLAYLAGWVLEWRWLAVLGCVPPSFMLLLMCFMPETPRFLLSQHKHQEAMAAMQFLWGYAQGWEEPPLGAQHQDFHVAQLRRPGVYKPFIIGISLMAFQQLSGVNAVMFYAETIFEEAKFKDSSLASVVVGVIQVLFTATAALIMDRAGRRLLLTLSGVVMVFSTSAFGTYFKLTEGGPSNSSHVDLPALVSMEAADTNVGLAWLAVGSMCLFIAGFAVGWGPIPWLLMSEIFPLHVKGVATGVCVLTNWFMAFLVTKEFSSLMEVLRPYGAFWLASAFCIFGVLFTLACVPETKGKTLEQITAHFEGR.

The tract at residues 1–20 (MTPEDQEETQPLLRPPGGSA) is disordered. Over 1 to 25 (MTPEDQEETQPLLRPPGGSAPRGRR) the chain is Cytoplasmic. Residues 11–20 (PLLRPPGGSA) show a composition bias toward low complexity. Positions 12–13 (LL) match the Dileucine internalization motif motif. The chain crosses the membrane as a helical span at residues 26 to 46 (VFLAAFAAALGPLSFGFALGY). Residues 47 to 70 (SSPAIPSLRRAAPPAPHLDEDAAS) lie on the Extracellular side of the membrane. Residues 71-91 (WFGAIVTLGAAAGGVLGGWLL) traverse the membrane as a helical segment. Residues 92 to 97 (DRAGRK) are Cytoplasmic-facing. The chain crosses the membrane as a helical span at residues 98-118 (LSLVLCALPFVAGFAVITAAQ). The Extracellular portion of the chain corresponds to 119–127 (NLWMLLGGR). The helical transmembrane segment at 128–148 (LLTGLACGIASLVAPVYISEI) threads the bilayer. The Cytoplasmic portion of the chain corresponds to 149-158 (AYPEVRGLLG). A helical membrane pass occupies residues 159–179 (SCVQLMVVTGILLAYLAGWVL). Gln-162 is a D-glucose binding site. At 180-182 (EWR) the chain is on the extracellular side. A helical transmembrane segment spans residues 183-203 (WLAVLGCVPPSFMLLLMCFMP). The Cytoplasmic portion of the chain corresponds to 204-257 (ETPRFLLSQHKHQEAMAAMQFLWGYAQGWEEPPLGAQHQDFHVAQLRRPGVYKP). Residues 258 to 278 (FIIGISLMAFQQLSGVNAVMF) form a helical membrane-spanning segment. D-glucose contacts are provided by residues 268-269 (QQ) and Asn-274. Topologically, residues 279 to 293 (YAETIFEEAKFKDSS) are extracellular. A helical transmembrane segment spans residues 294–314 (LASVVVGVIQVLFTATAALIM). The Cytoplasmic segment spans residues 315–320 (DRAGRR). The chain crosses the membrane as a helical span at residues 321–341 (LLLTLSGVVMVFSTSAFGTYF). Residues 342–368 (KLTEGGPSNSSHVDLPALVSMEAADTN) are Extracellular-facing. N-linked (GlcNAc...) asparagine glycosylation is present at Asn-350. Residues 369–389 (VGLAWLAVGSMCLFIAGFAVG) traverse the membrane as a helical segment. At 390–405 (WGPIPWLLMSEIFPLH) the chain is on the cytoplasmic side. Trp-395 is a D-glucose binding site. A helical membrane pass occupies residues 406–426 (VKGVATGVCVLTNWFMAFLVT). Residues 427 to 439 (KEFSSLMEVLRPY) lie on the Extracellular side of the membrane. The chain crosses the membrane as a helical span at residues 440 to 460 (GAFWLASAFCIFGVLFTLACV). Residues 461 to 478 (PETKGKTLEQITAHFEGR) are Cytoplasmic-facing.

Belongs to the major facilitator superfamily. Sugar transporter (TC 2.A.1.1) family. Glucose transporter subfamily. In terms of assembly, interacts with AP2B1. Abundantly expressed in testis and more moderately in lung, kidney, spleen, intestine, skeletal muscle, liver and mammary gland.

The protein localises to the cell membrane. Its subcellular location is the cytoplasmic vesicle membrane. It catalyses the reaction D-glucose(out) = D-glucose(in). It carries out the reaction D-fructose(out) = D-fructose(in). The enzyme catalyses L-dehydroascorbate(out) = L-dehydroascorbate(in). The catalysed reaction is alpha,alpha-trehalose(in) = alpha,alpha-trehalose(out). Inhibited by cytochalasin B. Its function is as follows. Insulin-regulated facilitative hexose transporter that mediates the transport of glucose and fructose. Facilitates hepatic influx of dietary trehalose, which in turn inhibits glucose and fructose influx triggering a starvation signal and hepatic autophagy through activation of AMPK and ULK1. Also able to mediate the transport of dehydroascorbate. This chain is Solute carrier family 2, facilitated glucose transporter member 8, found in Bos taurus (Bovine).